The following is a 339-amino-acid chain: N-acetyl-gamma-glutamyl-phosphate reductase (339 aa).

Cys-145 is an active-site residue.

Belongs to the NAGSA dehydrogenase family. Type 1 subfamily.

It localises to the cytoplasm. It carries out the reaction N-acetyl-L-glutamate 5-semialdehyde + phosphate + NADP(+) = N-acetyl-L-glutamyl 5-phosphate + NADPH + H(+). Its pathway is amino-acid biosynthesis; L-arginine biosynthesis; N(2)-acetyl-L-ornithine from L-glutamate: step 3/4. In terms of biological role, catalyzes the NADPH-dependent reduction of N-acetyl-5-glutamyl phosphate to yield N-acetyl-L-glutamate 5-semialdehyde. The chain is N-acetyl-gamma-glutamyl-phosphate reductase from Thermotoga maritima (strain ATCC 43589 / DSM 3109 / JCM 10099 / NBRC 100826 / MSB8).